Here is a 147-residue protein sequence, read N- to C-terminus: Globin (147 aa).

The 147-residue stretch at G1 to Q147 folds into the Globin domain. H66 and H98 together coordinate heme b.

This sequence belongs to the globin family. In terms of assembly, homodimer.

The polypeptide is Globin (Tritia mutabilis (Sea snail)).